The following is a 296-amino-acid chain: Low affinity immunoglobulin gamma Fc region receptor II (296 aa).

The signal sequence occupies residues 1–42 (MGIPSFLAFPAARRNRAHCTPWHPWGHMLLWTALLFLAPVSG). Residues 43-225 (KPDLPKAVVT…SSSSGPSSMT (183 aa)) are Extracellular-facing. 2 consecutive Ig-like C2-type domains span residues 47–129 (PKAV…DVIS) and 130–212 (DWLL…VNIT). Disulfide bonds link Cys-70-Cys-112 and Cys-151-Cys-195. N-linked (GlcNAc...) asparagine glycans are attached at residues Asn-79, Asn-86, Asn-105, Asn-179, Asn-186, and Asn-210. The helical transmembrane segment at 226–246 (AVAIGTCFAAVAIVAAIITWF) threads the bilayer. At 247-296 (RLRRKPISAGLTDAENDAARTEAENTVTYSLLSHPDVAEEDSESDYQKRL) the chain is on the cytoplasmic side. The ITIM motif motif lies at 273-278 (VTYSLL). Tyr-275 carries the phosphotyrosine; by SRC-type Tyr-kinases modification. Ser-288 is subject to Phosphoserine. Phosphotyrosine is present on Tyr-292.

As to quaternary structure, interacts with FGR and LYN. In terms of processing, phosphorylated by SRC-type Tyr-kinases such as LYN, BLK, FYN and SYK. Higher expression is found in macrophages than in neutrophils.

The protein resides in the cell membrane. In terms of biological role, binds to the Fc region of immunoglobulins gamma. Low affinity receptor. The chain is Low affinity immunoglobulin gamma Fc region receptor II (FCGR2) from Bos taurus (Bovine).